The following is a 190-amino-acid chain: Movement protein TGB3 (190 aa).

The Cytoplasmic segment spans residues 1 to 52 (MDPPVILHSPNCSCQFCSSELPSTHTCGSQDRTVPLHVEATAAGHMEAKNFS). Residues 53 to 73 (LQYVLLVAFVSVLLGFSFCVY) form a helical membrane-spanning segment. Over 74-166 (LKSMSNDEAS…TPCENNVLLK (93 aa)) the chain is Lumenal. 2 positions are modified to phosphotyrosine: Tyr89 and Tyr120. The Involved in plasmodesmata targeting and virus cell-to-cell movement signature appears at 89-93 (YQDLN). Residues 167–187 (LWKDDLSFTIIAVTVLVGAML) traverse the membrane as a helical segment. At 188 to 190 (ARC) the chain is on the cytoplasmic side.

This sequence belongs to the virgaviridae TGB3 movement protein family. Interacts with movement protein TGB2. TGB1-TGB3-TGB2 complex formation is enhanced by ATP hydrolysis.

The protein localises to the host cell junction. The protein resides in the host plasmodesma. Its subcellular location is the host endoplasmic reticulum membrane. It localises to the host cytoplasm. It is found in the host cytoskeleton. Participates in the transport of viral genome to neighboring plant cells directly through plasmodesmata, without any budding. TGBp2 and TGBp3 are necessary for intracellular delivery of TGBp1-containing vRNPs to plasmodesmata. Can gate plasmodesmata and increase their size exclusion limit. Induces host actin cytoskeleton network thickening, which probably plays a major role in virus cell-to-cell movement. This is Movement protein TGB3 from Solanum nigrum (Black nightshade).